A 119-amino-acid polypeptide reads, in one-letter code: Large ribosomal subunit protein bL20 (119 aa).

It belongs to the bacterial ribosomal protein bL20 family.

Functionally, binds directly to 23S ribosomal RNA and is necessary for the in vitro assembly process of the 50S ribosomal subunit. It is not involved in the protein synthesizing functions of that subunit. This Herminiimonas arsenicoxydans protein is Large ribosomal subunit protein bL20.